A 78-amino-acid chain; its full sequence is Putative DNA-binding protein MT0521 (78 aa).

The H-T-H motif DNA-binding region spans L24 to V45.

This chain is Putative DNA-binding protein MT0521, found in Mycobacterium tuberculosis (strain CDC 1551 / Oshkosh).